A 173-amino-acid chain; its full sequence is Crossover junction endodeoxyribonuclease RuvC (173 aa).

Catalysis depends on residues aspartate 11, glutamate 71, and aspartate 143. Residues aspartate 11, glutamate 71, and aspartate 143 each contribute to the Mg(2+) site.

Belongs to the RuvC family. In terms of assembly, homodimer which binds Holliday junction (HJ) DNA. The HJ becomes 2-fold symmetrical on binding to RuvC with unstacked arms; it has a different conformation from HJ DNA in complex with RuvA. In the full resolvosome a probable DNA-RuvA(4)-RuvB(12)-RuvC(2) complex forms which resolves the HJ. Mg(2+) is required as a cofactor.

The protein resides in the cytoplasm. The enzyme catalyses Endonucleolytic cleavage at a junction such as a reciprocal single-stranded crossover between two homologous DNA duplexes (Holliday junction).. In terms of biological role, the RuvA-RuvB-RuvC complex processes Holliday junction (HJ) DNA during genetic recombination and DNA repair. Endonuclease that resolves HJ intermediates. Cleaves cruciform DNA by making single-stranded nicks across the HJ at symmetrical positions within the homologous arms, yielding a 5'-phosphate and a 3'-hydroxyl group; requires a central core of homology in the junction. The consensus cleavage sequence is 5'-(A/T)TT(C/G)-3'. Cleavage occurs on the 3'-side of the TT dinucleotide at the point of strand exchange. HJ branch migration catalyzed by RuvA-RuvB allows RuvC to scan DNA until it finds its consensus sequence, where it cleaves and resolves the cruciform DNA. The sequence is that of Crossover junction endodeoxyribonuclease RuvC from Brucella suis biovar 1 (strain 1330).